The following is a 247-amino-acid chain: MARKNLGRRKIELVKMTNESNLQVTFSKRRSGLFKKGSELCTLCDAEIAIIVFSPSGKAYSFGHPNVNKLLDHSLGRVIRHNNTNFAESRTKLRIQMLNESLTEVMAEKEKEQETKQSIVQNERENKDAEKWWRNSPTELNLAQSTSMKCDLEALKKEVDEKVAQLHHRNLNFYVGSSSNVAAPAAVSGGNISTNHGFFDQNGNSTSAPTLPFGFNVMNRTPAGYNSYQLQNQEVKQVHPQYWARYY.

The MADS-box domain occupies 6 to 66 (LGRRKIELVK…GKAYSFGHPN (61 aa)). The stretch at 91-168 (TKLRIQMLNE…VDEKVAQLHH (78 aa)) forms a coiled coil.

In terms of tissue distribution, expressed in roots, leaves and shoot apices.

The protein localises to the nucleus. In terms of biological role, probable transcription factor that may function as a floral promoter operating upstream of known floral activators in the autonomous pathway. This is Agamous-like MADS-box protein AGL28 from Arabidopsis thaliana (Mouse-ear cress).